We begin with the raw amino-acid sequence, 310 residues long: Olfactory receptor 10N1 (310 aa).

Topologically, residues 1–23 are extracellular; it reads MDNYTLLNEFILLGIPQTQGLET. Asn-3 carries N-linked (GlcNAc...) asparagine glycosylation. The helical transmembrane segment at 24–44 threads the bilayer; the sequence is LLFVVFLFIYFFTLLGNSLIF. The Cytoplasmic segment spans residues 45–55; the sequence is TAIISSSTLHT. The chain crosses the membrane as a helical span at residues 56 to 76; it reads PMYFFLGLLSVFDMLFPSVTC. At 77-95 the chain is on the extracellular side; it reads PKMLFYLSVRSPAISYKGC. Cysteines 95 and 187 form a disulfide. Residues 96–116 form a helical membrane-spanning segment; it reads AAQLFFYHLLGSTEGCLYSVM. At 117-136 the chain is on the cytoplasmic side; the sequence is AYDRYVAICHPLRYMLIMKP. Residues 137–157 traverse the membrane as a helical segment; sequence GVCVSLVIIAWLVGCLHATIL. Residues 158–202 are Extracellular-facing; that stretch reads TSLTFQLVYCASNQVDYFFCDLPAVLPLACTDSKLARKVGSINVG. Residues 203–223 form a helical membrane-spanning segment; that stretch reads FLALMLLFSVCVSYVHIGVAI. Over 224 to 237 the chain is Cytoplasmic; it reads LRIRSAEGRQKAFS. Residues 238 to 258 traverse the membrane as a helical segment; sequence TCSAHLTAILCAYGPVIIIYL. The Extracellular segment spans residues 259-264; the sequence is QRTPNP. Residues 265–285 form a helical membrane-spanning segment; the sequence is LLGAVVQILNNIVSPMLNSLI. At 286–310 the chain is on the cytoplasmic side; the sequence is YSLRNKEVKRSLRRVFQNITFHGQK.

It belongs to the G-protein coupled receptor 1 family.

It localises to the cell membrane. Odorant receptor. The sequence is that of Olfactory receptor 10N1 from Mus musculus (Mouse).